A 206-amino-acid chain; its full sequence is Probable glutathione S-transferase 9 (206 aa).

Residues 2–79 form the GST N-terminal domain; sequence VSYKLIYFQS…YLSKQFGISG (78 aa). Residues tyrosine 8, tryptophan 39, lysine 43, 49-51, and 63-64 contribute to the glutathione site; these read GQV and QS. In terms of domain architecture, GST C-terminal spans 81–206; the sequence is SSWEEAQVDA…WIEKRPVTSR (126 aa).

The protein belongs to the GST superfamily. Sigma family.

The enzyme catalyses RX + glutathione = an S-substituted glutathione + a halide anion + H(+). In terms of biological role, conjugation of reduced glutathione to a wide number of exogenous and endogenous hydrophobic electrophiles. The chain is Probable glutathione S-transferase 9 (gst-9) from Caenorhabditis elegans.